We begin with the raw amino-acid sequence, 219 residues long: Proteasome subunit beta 2 (219 aa).

The propeptide at 1–25 (MAEWIAGGLEGPAGRGLDERVVRSG) is removed in mature form; by autocatalysis. The active-site Nucleophile is the Thr26.

The protein belongs to the peptidase T1B family. As to quaternary structure, the 20S proteasome core is composed of 14 alpha and 14 beta subunits that assemble into four stacked heptameric rings, resulting in a barrel-shaped structure. The two inner rings, each composed of seven catalytic beta subunits, are sandwiched by two outer rings, each composed of seven alpha subunits. The catalytic chamber with the active sites is on the inside of the barrel. Has a gated structure, the ends of the cylinder being occluded by the N-termini of the alpha-subunits. Is capped at one or both ends by the proteasome regulatory ATPase, PAN.

It is found in the cytoplasm. The enzyme catalyses Cleavage of peptide bonds with very broad specificity.. Its activity is regulated as follows. The formation of the proteasomal ATPase PAN-20S proteasome complex, via the docking of the C-termini of PAN into the intersubunit pockets in the alpha-rings, triggers opening of the gate for substrate entry. Interconversion between the open-gate and close-gate conformations leads to a dynamic regulation of the 20S proteasome proteolysis activity. In terms of biological role, component of the proteasome core, a large protease complex with broad specificity involved in protein degradation. This Aeropyrum pernix (strain ATCC 700893 / DSM 11879 / JCM 9820 / NBRC 100138 / K1) protein is Proteasome subunit beta 2.